The primary structure comprises 172 residues: ATP synthase subunit b (172 aa).

The helical transmembrane segment at glycine 13–leucine 33 threads the bilayer.

The protein belongs to the ATPase B chain family. In terms of assembly, F-type ATPases have 2 components, F(1) - the catalytic core - and F(0) - the membrane proton channel. F(1) has five subunits: alpha(3), beta(3), gamma(1), delta(1), epsilon(1). F(0) has three main subunits: a(1), b(2) and c(10-14). The alpha and beta chains form an alternating ring which encloses part of the gamma chain. F(1) is attached to F(0) by a central stalk formed by the gamma and epsilon chains, while a peripheral stalk is formed by the delta and b chains.

The protein resides in the cell membrane. Functionally, f(1)F(0) ATP synthase produces ATP from ADP in the presence of a proton or sodium gradient. F-type ATPases consist of two structural domains, F(1) containing the extramembraneous catalytic core and F(0) containing the membrane proton channel, linked together by a central stalk and a peripheral stalk. During catalysis, ATP synthesis in the catalytic domain of F(1) is coupled via a rotary mechanism of the central stalk subunits to proton translocation. Component of the F(0) channel, it forms part of the peripheral stalk, linking F(1) to F(0). This Priestia megaterium (strain ATCC 12872 / QMB1551) (Bacillus megaterium) protein is ATP synthase subunit b.